A 623-amino-acid chain; its full sequence is DEAD-box ATP-dependent RNA helicase 52C (623 aa).

Residues 1–120 form a disordered region; it reads MATPSRTSWA…DGDAAAGAGD (120 aa). Residues 10-29 are compositionally biased toward low complexity; the sequence is ADVADADPAPAPAPAANGPA. The segment covering 54–69 has biased composition (pro residues); the sequence is APPPSSSSSSAPPPRA. Low complexity predominate over residues 70 to 83; it reads APGLLAPRPAAAGM. Gly residues predominate over residues 84 to 97; that stretch reads GRMGGGGGGGGFGG. The Q motif signature appears at 155–183; it reads GTFAEIDLGQALNDNIRRCKYVRPTPVQR. The 187-residue stretch at 186 to 372 folds into the Helicase ATP-binding domain; it reads IPISLAGRDL…SDFLENYIFL (187 aa). An ATP-binding site is contributed by 199-206; the sequence is AQTGSGKT. Residues 316-319 carry the DEAD box motif; that stretch reads DEAD. Positions 399 to 550 constitute a Helicase C-terminal domain; sequence HLMDLLHAQR…EVPAWLSRYA (152 aa). The segment at 553–595 is disordered; that stretch reads PSYGGGGGRNRRSGGGSRFGGRDFRRDSSSGRGGGDYYGGGSS. A compositionally biased stretch (gly residues) spans 555 to 571; the sequence is YGGGGGRNRRSGGGSRF. Residues 572–581 are compositionally biased toward basic and acidic residues; sequence GGRDFRRDSS. The span at 583-595 shows a compositional bias: gly residues; the sequence is GRGGGDYYGGGSS.

Belongs to the DEAD box helicase family. DDX3/DED1 subfamily.

The enzyme catalyses ATP + H2O = ADP + phosphate + H(+). The chain is DEAD-box ATP-dependent RNA helicase 52C from Oryza sativa subsp. japonica (Rice).